The primary structure comprises 74 residues: Apolipoprotein C-I, acidic form (74 aa).

Residues 1-26 (MRLFLSLPVLVVVLSMVLEGPTPAQG) form the signal peptide.

This sequence belongs to the apolipoprotein C1 family.

It localises to the secreted. This chain is Apolipoprotein C-I, acidic form (APOC1A), found in Colobus guereza (Mantled guereza).